Reading from the N-terminus, the 161-residue chain is ATP synthase subunit b 1 (161 aa).

The chain crosses the membrane as a helical span at residues 3-23 (LDATFYALVGLILFFVLIAYL).

It belongs to the ATPase B chain family. In terms of assembly, F-type ATPases have 2 components, F(1) - the catalytic core - and F(0) - the membrane proton channel. F(1) has five subunits: alpha(3), beta(3), gamma(1), delta(1), epsilon(1). F(0) has three main subunits: a(1), b(2) and c(10-14). The alpha and beta chains form an alternating ring which encloses part of the gamma chain. F(1) is attached to F(0) by a central stalk formed by the gamma and epsilon chains, while a peripheral stalk is formed by the delta and b chains.

The protein resides in the cell inner membrane. F(1)F(0) ATP synthase produces ATP from ADP in the presence of a proton or sodium gradient. F-type ATPases consist of two structural domains, F(1) containing the extramembraneous catalytic core and F(0) containing the membrane proton channel, linked together by a central stalk and a peripheral stalk. During catalysis, ATP synthesis in the catalytic domain of F(1) is coupled via a rotary mechanism of the central stalk subunits to proton translocation. In terms of biological role, component of the F(0) channel, it forms part of the peripheral stalk, linking F(1) to F(0). The protein is ATP synthase subunit b 1 of Rhizobium meliloti (strain 1021) (Ensifer meliloti).